The following is a 445-amino-acid chain: Chromosomal replication initiator protein DnaA (445 aa).

A domain I, interacts with DnaA modulators region spans residues 1 to 69 (MEKIWLEAQS…IEAISSLTNI (69 aa)). Residues 69 to 108 (IKYQVDFKITEKSQVEKKKVDLQATEKIENDSTRNVDFNT) form a domain II region. Positions 109–325 (NLNPKYTFDS…GMLIRLGAYA (217 aa)) are domain III, AAA+ region. Residues Gly-153, Gly-155, Lys-156, and Thr-157 each coordinate ATP. The domain IV, binds dsDNA stretch occupies residues 326 to 445 (SLTGSEISLN…VEKMKKELMS (120 aa)).

It belongs to the DnaA family. Oligomerizes as a right-handed, spiral filament on DNA at oriC.

The protein localises to the cytoplasm. Functionally, plays an essential role in the initiation and regulation of chromosomal replication. ATP-DnaA binds to the origin of replication (oriC) to initiate formation of the DNA replication initiation complex once per cell cycle. Binds the DnaA box (a 9 base pair repeat at the origin) and separates the double-stranded (ds)DNA. Forms a right-handed helical filament on oriC DNA; dsDNA binds to the exterior of the filament while single-stranded (ss)DNA is stabiized in the filament's interior. The ATP-DnaA-oriC complex binds and stabilizes one strand of the AT-rich DNA unwinding element (DUE), permitting loading of DNA polymerase. After initiation quickly degrades to an ADP-DnaA complex that is not apt for DNA replication. Binds acidic phospholipids. The protein is Chromosomal replication initiator protein DnaA of Geotalea daltonii (strain DSM 22248 / JCM 15807 / FRC-32) (Geobacter daltonii).